The sequence spans 222 residues: U-scoloptoxin(11)-Sm5a (222 aa).

Belongs to the scoloptoxin-11 family. Contains 8 disulfide bonds. As to expression, expressed by the venom gland.

The protein resides in the secreted. The sequence is that of U-scoloptoxin(11)-Sm5a from Scolopendra morsitans (Tanzanian blue ringleg centipede).